Here is a 154-residue protein sequence, read N- to C-terminus: Endoribonuclease YbeY (154 aa).

3 residues coordinate Zn(2+): His115, His119, and His125.

Belongs to the endoribonuclease YbeY family. Zn(2+) is required as a cofactor.

Its subcellular location is the cytoplasm. Single strand-specific metallo-endoribonuclease involved in late-stage 70S ribosome quality control and in maturation of the 3' terminus of the 16S rRNA. The polypeptide is Endoribonuclease YbeY (Halorhodospira halophila (strain DSM 244 / SL1) (Ectothiorhodospira halophila (strain DSM 244 / SL1))).